We begin with the raw amino-acid sequence, 171 residues long: Ribosome maturation factor RimM (171 aa).

The 73-residue stretch at 96-168 (EDGFYDHELE…TATITPPEGL (73 aa)) folds into the PRC barrel domain.

Belongs to the RimM family. Binds ribosomal protein uS19.

The protein resides in the cytoplasm. Functionally, an accessory protein needed during the final step in the assembly of 30S ribosomal subunit, possibly for assembly of the head region. Essential for efficient processing of 16S rRNA. May be needed both before and after RbfA during the maturation of 16S rRNA. It has affinity for free ribosomal 30S subunits but not for 70S ribosomes. This is Ribosome maturation factor RimM from Corynebacterium glutamicum (strain R).